The primary structure comprises 475 residues: UDP-N-acetylmuramate--L-alanine ligase (475 aa).

An ATP-binding site is contributed by 117 to 123 (GTHGKTT).

It belongs to the MurCDEF family.

It localises to the cytoplasm. It carries out the reaction UDP-N-acetyl-alpha-D-muramate + L-alanine + ATP = UDP-N-acetyl-alpha-D-muramoyl-L-alanine + ADP + phosphate + H(+). It functions in the pathway cell wall biogenesis; peptidoglycan biosynthesis. Its function is as follows. Cell wall formation. The protein is UDP-N-acetylmuramate--L-alanine ligase of Chlorobaculum tepidum (strain ATCC 49652 / DSM 12025 / NBRC 103806 / TLS) (Chlorobium tepidum).